Here is a 490-residue protein sequence, read N- to C-terminus: Ribosomal L1 domain-containing protein 1 (490 aa).

An N-acetylmethionine modification is found at M1. Positions 1 to 27 (MEDSASASLSSAAATGTSTSTPAAPTA) are enriched in low complexity. The interval 1–33 (MEDSASASLSSAAATGTSTSTPAAPTARKQLDK) is disordered. Glycyl lysine isopeptide (Lys-Gly) (interchain with G-Cter in SUMO2) cross-links involve residues K120 and K254. Residues 280-293 (LNKKKKEARRKRRE) show a composition bias toward basic residues. Positions 280–313 (LNKKKKEARRKRRERNFEKQKERKKKRQQARKTA) form a coiled coil. Positions 280-490 (LNKKKKEARR…PKKPKVPQST (211 aa)) are disordered. Residues 329 to 343 (TVKKPESKKEQTPEH) show a composition bias toward basic and acidic residues. Residue T340 is modified to Phosphothreonine. A compositionally biased stretch (basic residues) spans 344–353 (GKKKRGRGKA). The residue at position 358 (T358) is a Phosphothreonine. At S361 the chain carries Phosphoserine. T375 is subject to Phosphothreonine. Residues 376–385 (PANEKVEIQK) are compositionally biased toward basic and acidic residues. Residue K380 forms a Glycyl lysine isopeptide (Lys-Gly) (interchain with G-Cter in SUMO2) linkage. Phosphoserine is present on residues S392 and S396. A phosphothreonine mark is found at T415 and T423. S427 is subject to Phosphoserine. The span at 427 to 460 (SPEKKPKIKEEAVKEKSPSLGKKDARQTPKKPEA) shows a compositional bias: basic and acidic residues. Residue K435 forms a Glycyl lysine isopeptide (Lys-Gly) (interchain with G-Cter in SUMO2) linkage. The residue at position 443 (S443) is a Phosphoserine. K461 participates in a covalent cross-link: Glycyl lysine isopeptide (Lys-Gly) (interchain with G-Cter in SUMO2). Phosphothreonine is present on T465. K468 carries the N6-acetyllysine modification. A Phosphoserine modification is found at S469. A compositionally biased stretch (basic residues) spans 469-490 (SVRKASHTPKKWPKKPKVPQST).

This sequence belongs to the universal ribosomal protein uL1 family. Highly divergent. In terms of assembly, interacts with ING1 (isoform 2). Interacts with KPNA7 and KPNA2. Expressed at high intensities in the heart, skeletal muscle, and placenta.

It is found in the nucleus. The protein resides in the nucleolus. Regulates cellular senescence through inhibition of PTEN translation. Acts as a pro-apoptotic regulator in response to DNA damage. The polypeptide is Ribosomal L1 domain-containing protein 1 (RSL1D1) (Homo sapiens (Human)).